An 819-amino-acid chain; its full sequence is Leucine--tRNA ligase (819 aa).

A 'HIGH' region motif is present at residues 42–52 (PYPSGRLHMGH). The 'KMSKS' region signature appears at 577–581 (KMSKS). Lysine 580 contributes to the ATP binding site.

This sequence belongs to the class-I aminoacyl-tRNA synthetase family.

The protein resides in the cytoplasm. The catalysed reaction is tRNA(Leu) + L-leucine + ATP = L-leucyl-tRNA(Leu) + AMP + diphosphate. This is Leucine--tRNA ligase from Saccharophagus degradans (strain 2-40 / ATCC 43961 / DSM 17024).